Reading from the N-terminus, the 222-residue chain is GTP cyclohydrolase 1 (222 aa).

Residues cysteine 111, histidine 114, and cysteine 182 each contribute to the Zn(2+) site.

This sequence belongs to the GTP cyclohydrolase I family. In terms of assembly, toroid-shaped homodecamer, composed of two pentamers of five dimers.

The catalysed reaction is GTP + H2O = 7,8-dihydroneopterin 3'-triphosphate + formate + H(+). It participates in cofactor biosynthesis; 7,8-dihydroneopterin triphosphate biosynthesis; 7,8-dihydroneopterin triphosphate from GTP: step 1/1. Its activity is regulated as follows. Allosteric enzyme. Activity is modulated by K(+), divalent cations, UTP, and tetrahydrobiopterin. Tetrahydrobiopterin is an inhibitor of this enzyme. This Salmonella typhi protein is GTP cyclohydrolase 1.